The primary structure comprises 317 residues: uncharacterized protein (317 aa).

It to A.aeolicus AA11 and AA34.

This is an uncharacterized protein from Aquifex aeolicus (strain VF5).